The following is a 232-amino-acid chain: U-scoloptoxin(11)-Ssd2a (232 aa).

Positions Met-1–Gly-21 are cleaved as a signal peptide. A propeptide spanning residues Lys-22 to Arg-32 is cleaved from the precursor.

Contains 8 disulfide bonds. Expressed by the venom gland.

Its subcellular location is the secreted. This is U-scoloptoxin(11)-Ssd2a from Scolopendra dehaani (Thai centipede).